The following is a 230-amino-acid chain: Large ribosomal subunit protein uL1 (230 aa).

It belongs to the universal ribosomal protein uL1 family. In terms of assembly, part of the 50S ribosomal subunit.

Its function is as follows. Binds directly to 23S rRNA. The L1 stalk is quite mobile in the ribosome, and is involved in E site tRNA release. Protein L1 is also a translational repressor protein, it controls the translation of the L11 operon by binding to its mRNA. The sequence is that of Large ribosomal subunit protein uL1 from Chromohalobacter salexigens (strain ATCC BAA-138 / DSM 3043 / CIP 106854 / NCIMB 13768 / 1H11).